The sequence spans 357 residues: G-protein coupled receptor 183 (357 aa).

The Extracellular segment spans residues M1–R27. N4 carries N-linked (GlcNAc...) asparagine glycosylation. Residues V28–V53 traverse the membrane as a helical segment. The Cytoplasmic segment spans residues Q54–D73. A helical transmembrane segment spans residues I74–F91. Position 83 (R83) interacts with 7alpha,25-dihydroxycholesterol. The Extracellular portion of the chain corresponds to D92 to R101. C100 and C177 are joined by a disulfide. A helical transmembrane segment spans residues V102–I123. 7alpha,25-dihydroxycholesterol is bound by residues Y108 and Y112. The tract at residues S122–V130 is interaction with G proteins. Residues D124–K145 lie on the Cytoplasmic side of the membrane. Residues G146 to L164 form a helical membrane-spanning segment. The Extracellular segment spans residues T165–S188. A helical membrane pass occupies residues L189–C211. Residues Y212–K237 lie on the Cytoplasmic side of the membrane. The helical transmembrane segment at A238–I261 threads the bilayer. A 7alpha,25-dihydroxycholesterol-binding site is contributed by Y256. Over Q262–Q283 the chain is Extracellular. The chain crosses the membrane as a helical span at residues I284–C308. Residues K309–R357 lie on the Cytoplasmic side of the membrane. Residues S324 and S345 each carry the phosphoserine modification. Positions E336 to R357 are disordered. The span at E344–R357 shows a compositional bias: polar residues.

The protein belongs to the G-protein coupled receptor 1 family. As to quaternary structure, homodimer and heterodimer. Heterodimerizes with CXCR5; leading to modulate the interaction between of CXCL13 and CXCR5. As to expression, expressed in mature B-cells and increases in expression early after activation, before being down-regulated in germinal center B-cells. Expressed in astrocytes. Specifically expressed in CD4(+) dendritic cells but not in CD8(+) dendritic cells. Expressed in monocyte/osteoclasts precursors and mature osteoclasts.

It is found in the cell membrane. In terms of biological role, G-protein coupled receptor expressed in lymphocytes that acts as a chemotactic receptor for B-cells, T-cells, splenic dendritic cells, monocytes/macrophages and astrocytes. Receptor for oxysterol 7-alpha,25-dihydroxycholesterol (7-alpha,25-OHC) and other related oxysterols. Mediates cell positioning and movement of a number of cells by binding the 7-alpha,25-OHC ligand that forms a chemotactic gradient. Binding of 7-alpha,25-OHC mediates the correct localization of B-cells during humoral immune responses. Collaborates with CXCR5 to mediate B-cell migration; probably by forming a heterodimer with CXCR5 that affects the interaction between of CXCL13 and CXCR5. Guides B-cell movement along the B-cell zone-T-cell zone boundary and later to interfollicular and outer follicular regions. Its specific expression during B-cell maturation helps position B-cells appropriately for mounting T-dependent antibody responses. Also acts as a chemotactic receptor for some T-cells upon binding to 7-alpha,25-OHC ligand. Promotes follicular helper T (Tfh) cells differentiation by positioning activated T-cells at the follicle-T-zone interface, promoting contact of newly activated CD4 T-cells with activated dendritic cells and exposing them to Tfh-cell-promoting inducible costimulator (ICOS) ligand. Expression in splenic dendritic cells is required for their homeostasis, localization and ability to induce B- and T-cell responses: GPR183 acts as a chemotactic receptor in dendritic cells that mediates the accumulation of CD4(+) dendritic cells in bridging channels. Regulates migration of astrocytes and is involved in communication between astrocytes and macrophages. Promotes osteoclast precursor migration to bone surfaces. Signals constitutively through G(i)-alpha, but not G(s)-alpha or G(q)-alpha. Signals constitutively also via MAPK1/3 (ERK1/2). The polypeptide is G-protein coupled receptor 183 (Mus musculus (Mouse)).